The sequence spans 493 residues: Ketol-acid reductoisomerase (NADP(+)) (493 aa).

One can recognise a KARI N-terminal Rossmann domain in the interval Leu-14–Ser-208. Residues Cys-45–Gln-48, Arg-68, Arg-76, Ser-78, and Asp-108–Gln-110 each bind NADP(+). His-132 is an active-site residue. An NADP(+)-binding site is contributed by Gly-158. KARI C-terminal knotted domains lie at Ser-209–Ala-345 and Asp-346–Met-486. Asp-217, Glu-221, Glu-390, and Glu-394 together coordinate Mg(2+). Ser-415 provides a ligand contact to substrate.

The protein belongs to the ketol-acid reductoisomerase family. Mg(2+) is required as a cofactor.

It carries out the reaction (2R)-2,3-dihydroxy-3-methylbutanoate + NADP(+) = (2S)-2-acetolactate + NADPH + H(+). It catalyses the reaction (2R,3R)-2,3-dihydroxy-3-methylpentanoate + NADP(+) = (S)-2-ethyl-2-hydroxy-3-oxobutanoate + NADPH + H(+). It functions in the pathway amino-acid biosynthesis; L-isoleucine biosynthesis; L-isoleucine from 2-oxobutanoate: step 2/4. Its pathway is amino-acid biosynthesis; L-valine biosynthesis; L-valine from pyruvate: step 2/4. Functionally, involved in the biosynthesis of branched-chain amino acids (BCAA). Catalyzes an alkyl-migration followed by a ketol-acid reduction of (S)-2-acetolactate (S2AL) to yield (R)-2,3-dihydroxy-isovalerate. In the isomerase reaction, S2AL is rearranged via a Mg-dependent methyl migration to produce 3-hydroxy-3-methyl-2-ketobutyrate (HMKB). In the reductase reaction, this 2-ketoacid undergoes a metal-dependent reduction by NADPH to yield (R)-2,3-dihydroxy-isovalerate. This Actinobacillus pleuropneumoniae serotype 3 (strain JL03) protein is Ketol-acid reductoisomerase (NADP(+)).